Reading from the N-terminus, the 496-residue chain is Glycerol kinase (496 aa).

Thr-11 lines the ADP pocket. The ATP site is built by Thr-11, Thr-12, and Ser-13. Thr-11 contributes to the sn-glycerol 3-phosphate binding site. ADP is bound at residue Arg-15. Residues Arg-81, Glu-82, Tyr-133, and Asp-242 each contribute to the sn-glycerol 3-phosphate site. Residues Arg-81, Glu-82, Tyr-133, Asp-242, and Gln-243 each coordinate glycerol. ADP contacts are provided by Thr-264 and Gly-307. Thr-264, Gly-307, Gln-311, and Gly-408 together coordinate ATP. Positions 408 and 412 each coordinate ADP.

The protein belongs to the FGGY kinase family.

It catalyses the reaction glycerol + ATP = sn-glycerol 3-phosphate + ADP + H(+). It functions in the pathway polyol metabolism; glycerol degradation via glycerol kinase pathway; sn-glycerol 3-phosphate from glycerol: step 1/1. Inhibited by fructose 1,6-bisphosphate (FBP). In terms of biological role, key enzyme in the regulation of glycerol uptake and metabolism. Catalyzes the phosphorylation of glycerol to yield sn-glycerol 3-phosphate. The protein is Glycerol kinase of Trichlorobacter lovleyi (strain ATCC BAA-1151 / DSM 17278 / SZ) (Geobacter lovleyi).